Consider the following 972-residue polypeptide: Translation initiation factor IF-2 (972 aa).

A compositionally biased stretch (basic and acidic residues) spans 48–63; it reads DHLRKSHGATDGDKRK. 2 disordered regions span residues 48–85 and 99–385; these read DHLRKSHGATDGDKRKITLTRKHTSEIKQSDATGKART and RDDV…QAPT. Low complexity predominate over residues 105-114; the sequence is GAEQGQAQVA. The segment covering 121-181 has biased composition (basic and acidic residues); the sequence is ELKRREEEAR…EEEAAAKRVA (61 aa). The span at 182-205 shows a compositional bias: low complexity; the sequence is AEAAAAQQQAAAQQAAAAEQQEAA. Over residues 212-263 the composition is skewed to basic and acidic residues; the sequence is DEARAAAERAAQREAAKKAEDAAREAADKARAEQEEISKRRAAAEAEARAIR. Positions 279 to 288 are enriched in pro residues; it reads PPKPVEPPKP. The segment covering 313-328 has biased composition (low complexity); the sequence is PAGAAAPATTAPAGAG. The segment covering 357-370 has biased composition (gly residues); the sequence is SSGGVDRGWRGGPK. One can recognise a tr-type G domain in the interval 472–641; it reads PRPPVVTVMG…LLQAEVLELK (170 aa). The G1 stretch occupies residues 481–488; sequence GHVDHGKT. 481–488 contacts GTP; it reads GHVDHGKT. Positions 506–510 are G2; sequence GITQH. The interval 527-530 is G3; sequence DTPG. Residues 527-531 and 581-584 contribute to the GTP site; these read DTPGH and NKID. A G4 region spans residues 581–584; that stretch reads NKID. A G5 region spans residues 617–619; that stretch reads SAK.

The protein belongs to the TRAFAC class translation factor GTPase superfamily. Classic translation factor GTPase family. IF-2 subfamily.

The protein resides in the cytoplasm. Functionally, one of the essential components for the initiation of protein synthesis. Protects formylmethionyl-tRNA from spontaneous hydrolysis and promotes its binding to the 30S ribosomal subunits. Also involved in the hydrolysis of GTP during the formation of the 70S ribosomal complex. The polypeptide is Translation initiation factor IF-2 (Burkholderia lata (strain ATCC 17760 / DSM 23089 / LMG 22485 / NCIMB 9086 / R18194 / 383)).